Here is a 213-residue protein sequence, read N- to C-terminus: MTENLYTYGIIEQEDLELDVEGVAGAEQVYTVDYKTLSAVVSDIDTTDPERTDEDVEAHNNVLQEVLKHEEERTVVPMSFGMAFKSARTLKGVLRGARRALRSTLNDIEGTVELGVKILGPGDDTVPREEIQENVTDQLADLSINETENDLFTDRLIINKSYLVDFEKRDAFDSAIDDVEAEYDELTIQYTGPWPPYNFVDIHIGAEQQQGGR.

The protein belongs to the gas vesicle GvpF/GvpL family. As to quaternary structure, binds GvpA1 in early growth stages; is the only one of GvpF1 to GvpM1 that interacts with GvpA1 in H.volcanii experiments. GvpF to GvpM interact with each other in vitro, and may form multi-subunit complex(es). Interacts with GvpC1 and GvpO1.

It localises to the gas vesicle. The protein resides in the cytoplasm. Might be involved in preventing aggregation of GvpA1. Proteins GvpF to GvpM might be involved in nucleating gas vesicle formation. A minor component of the gas vesicle, also found in soluble extracts. Gas vesicles are hollow, gas filled proteinaceous nanostructures found in several microbial planktonic microorganisms. They allow positioning of halobacteria at the optimal depth for growth in the poorly aerated, shallow brine pools of their habitat. In terms of biological role, expression of a 9.5 kb p-vac DNA fragment containing 2 divergently transcribed regions (gvpD-gvpE-gvpF-gvpG-gvpH-gvpI-gvpJ-gvpK-gvpL-gvpM and gvpA-gvpC-gvpN-gvpO) allows H.volcanii to produce gas vesicles. A minimal gas vesicle can be made in H.volcanii by gvpA1-gvpO1 plus gvpF1-gvpG1-gvpJ1-gvpK1-gvpL1-gvpM1; lack of enough GvpJ1 prevents formation. The same region restores gas vesicle production in H.halobium without the p-vac locus. The sequence is that of Gas vesicle protein F1 (gvpF11) from Halobacterium salinarum (strain ATCC 700922 / JCM 11081 / NRC-1) (Halobacterium halobium).